The chain runs to 287 residues: Ethylene-inducing xylanase 3 (287 aa).

The first 19 residues, 1-19, serve as a signal peptide directing secretion; the sequence is MVCFSSLFVAASAIAVVFA. The GH11 domain occupies 31 to 219; that stretch reads QSTPSSQGTH…SSGSARINVA (189 aa). The active-site Nucleophile is glutamate 115. Residue glutamate 206 is the Proton donor of the active site. The region spanning 252–287 is the CBM1 domain; the sequence is SCAARWGQCGGSGWNGATCCSAGTCQAQNQWYSQCL.

The protein belongs to the glycosyl hydrolase 11 (cellulase G) family.

It carries out the reaction Endohydrolysis of (1-&gt;4)-beta-D-xylosidic linkages in xylans.. The protein operates within glycan degradation; xylan degradation. Functionally, endo-1,4-beta-xylanase involved in the hydrolysis of xylan, a major structural heterogeneous polysaccharide found in plant biomass representing the second most abundant polysaccharide in the biosphere, after cellulose. Exhibits immunity-inducing activity and induces cell death in Nicotiana benthamiana. This is Ethylene-inducing xylanase 3 from Verticillium longisporum (Verticillium dahliae var. longisporum).